Consider the following 435-residue polypeptide: NADH-quinone oxidoreductase subunit D (435 aa).

It belongs to the complex I 49 kDa subunit family. In terms of assembly, NDH-1 is composed of 14 different subunits. Subunits NuoB, C, D, E, F, and G constitute the peripheral sector of the complex.

The protein resides in the cell inner membrane. The catalysed reaction is a quinone + NADH + 5 H(+)(in) = a quinol + NAD(+) + 4 H(+)(out). Its function is as follows. NDH-1 shuttles electrons from NADH, via FMN and iron-sulfur (Fe-S) centers, to quinones in the respiratory chain. The immediate electron acceptor for the enzyme in this species is believed to be ubiquinone. Couples the redox reaction to proton translocation (for every two electrons transferred, four hydrogen ions are translocated across the cytoplasmic membrane), and thus conserves the redox energy in a proton gradient. The polypeptide is NADH-quinone oxidoreductase subunit D (Xanthomonas campestris pv. campestris (strain 8004)).